The sequence spans 269 residues: Zinc transporter ZupT (269 aa).

The next 8 membrane-spanning stretches (helical) occupy residues 11 to 31 (IALAVTLAAGLATAIGSLLVL), 40 to 60 (LLAFGLAFAGGAMVYVSLSEI), 80 to 100 (YGTLAFLLGVIVIVLIDHFIP), 125 to 145 (ALLTSIAITAHNFPEGLATFF), 158 to 178 (AFAIAIHNIPEGIAIAVPVYF), 187 to 207 (FSASLLSGLAEPVGAALGYWL), 217 to 237 (FGWVFGLIAGVMVFLALDELL), and 249 to 269 (TVYGLVAGMGTLAISLVLFKW). Fe(2+) contacts are provided by N136 and E139. Residues E139 and H164 each contribute to the Zn(2+) site. Fe(2+) is bound by residues N165, E168, and E197. Residue E168 coordinates Zn(2+).

This sequence belongs to the ZIP transporter (TC 2.A.5) family. ZupT subfamily.

It localises to the cell inner membrane. It catalyses the reaction Zn(2+)(in) = Zn(2+)(out). Mediates zinc uptake. May also transport other divalent cations. This Stenotrophomonas maltophilia (strain R551-3) protein is Zinc transporter ZupT.